We begin with the raw amino-acid sequence, 369 residues long: Serine/threonine-protein acetyltransferase HopZ1a (369 aa).

The disordered stretch occupies residues 1-46; the sequence is MGNVCVGGSRMSHQVYSPDRADTPPRSERNTPDRRQRAAGDAERTQ. Over residues 19 to 46 the composition is skewed to basic and acidic residues; it reads DRADTPPRSERNTPDRRQRAAGDAERTQ. R49, K53, and R106 together coordinate 1D-myo-inositol hexakisphosphate. Catalysis depends on residues H150 and E170. H150 contacts CoA. Residues A177 and 211–212 contribute to the CoA site; that span reads KT. C216 is an active-site residue. Residues N222, 226-229, and 289-290 each bind 1D-myo-inositol hexakisphosphate; these read KAHK and KH. K289 bears the N6-acetyllysine; by autocatalysis mark. 292 to 295 contributes to the CoA binding site; sequence ASLT. Residues 314–317 and R326 each bind 1D-myo-inositol hexakisphosphate; that span reads SEGH. Residues 331-334 and 344-348 contribute to the CoA site; these read RVKR and SNTQF. 1D-myo-inositol hexakisphosphate-binding residues include Q358 and R362.

This sequence belongs to the acetyltransferase YopJ family. In terms of assembly, interacts with host plant JAZ proteins (e.g. Glycine max JAZ1 and Arabidospis thaliana TIFY10B/JAZ2, TIFY11A/JAZ5, TIFY11B/JAZ6, TIFY5A/JAZ8 and TIFY3B/JAZ12) and triggers their degradation. Binds directly to SZE1 and SZE2 at the host plasma membrane; this interaction with a complex made of, at least, SZE1, BKN2/SZE2, ZAR1 and ZED1 triggers host immunity. 1D-myo-inositol hexakisphosphate serves as cofactor. In terms of processing, autoacetylated at Lys-289; while autoacetylation at Lys-289 is required for virulence function to some extent, it is not essential.

It localises to the secreted. The protein localises to the host cell membrane. It is found in the host cytoplasm. The protein resides in the host cytoskeleton. Its subcellular location is the host nucleus. It carries out the reaction L-threonyl-[protein] + acetyl-CoA = O-acetyl-L-threonyl-[protein] + CoA. The catalysed reaction is L-seryl-[protein] + acetyl-CoA = O-acetyl-L-seryl-[protein] + CoA. It catalyses the reaction L-lysyl-[protein] + acetyl-CoA = N(6)-acetyl-L-lysyl-[protein] + CoA + H(+). With respect to regulation, 1D-myo-inositol hexakisphosphate activates protein-acetyltransferase activity via an allosteric mechanism: 1D-myo-inositol hexakisphosphate-binding induces a conformational rearrangement that stimulates the interaction with acetyl-CoA. Acetyltransferase activity is activated by phytic acid. In terms of biological role, serine/threonine-protein acetyltransferase translocated into infected cells, which impairs host microtubule network and host immunity by mediating acetylation of target proteins. Blocks secretion in host cells by mediating acetylation of host tubulin, thereby impairing host microbubule network. Impairs host cell immunity by mediating acetylation of host TIFY/JAZ transcription repressors (Arabidopsis thaliana TIFY10B/JAZ2, TIFY11A/JAZ5, TIFY11B/JAZ6, TIFY5A/JAZ8, TIFY9/JAZ10 and TIFY3B/JAZ12), thereby activating host jasmonate signaling. This chain is Serine/threonine-protein acetyltransferase HopZ1a, found in Pseudomonas syringae pv. syringae.